The following is a 416-amino-acid chain: MSKADLIIGSQWGDEGKGKIVDMLCANYDYVCRSGGGHNAGHTIWVDGVRYAMHLVPSGILHENIINIIGNGVVVNPDVLIAEMAQFKNLKGRFFISEKAHLNLEHHSLIDQAKERAKGDKAIGTTGKGIGPAYADKVNRTGHRVGELLNPEKLCENLMKEFDENAKFYDALNIKIPEKIAVFNELKRFKEFLAPYIANTTEMLWKALDENKKVLVEGAQGSLLDIDHGTYPYVTSSNTVASGACTGLGLAPKDIGEVIGIVKAYTTRVGNGAFPSEANDEWGEKMCQIGKEFGTTTGRKRRCGWFDAVCVKYSARLSGIDKFALMKLDVLDGFEKVKICTAYKLNGEIIDYFPCNLESVEPVYEEMDGWDSIKGVKKFSDLPENAQKYIKRIEELTNMRAGFISTSPERDDTIIL.

GTP-binding positions include 13 to 19 and 41 to 43; these read GDEGKGK and GHT. The Proton acceptor role is filled by Asp14. Positions 14 and 41 each coordinate Mg(2+). IMP contacts are provided by residues 14 to 17, 39 to 42, Thr126, Arg140, Gln220, Thr235, and Arg299; these read DEGK and NAGH. Residue His42 is the Proton donor of the active site. 295-301 is a substrate binding site; the sequence is TTTGRKR. GTP contacts are provided by residues Arg301, 327–329, and 405–407; these read KLD and STS.

It belongs to the adenylosuccinate synthetase family. In terms of assembly, homodimer. The cofactor is Mg(2+).

It localises to the cytoplasm. The catalysed reaction is IMP + L-aspartate + GTP = N(6)-(1,2-dicarboxyethyl)-AMP + GDP + phosphate + 2 H(+). The protein operates within purine metabolism; AMP biosynthesis via de novo pathway; AMP from IMP: step 1/2. In terms of biological role, plays an important role in the de novo pathway of purine nucleotide biosynthesis. Catalyzes the first committed step in the biosynthesis of AMP from IMP. This Campylobacter hominis (strain ATCC BAA-381 / DSM 21671 / CCUG 45161 / LMG 19568 / NCTC 13146 / CH001A) protein is Adenylosuccinate synthetase.